A 330-amino-acid chain; its full sequence is PDZ and LIM domain protein 4 (330 aa).

In terms of domain architecture, PDZ spans 1-84 (MPHSVTLRGP…HLTLSVSRPE (84 aa)). Residues 104–180 (IDPEIQDGSP…DPARGLPRSR (77 aa)) form a disordered region. Residues 111–121 (GSPTTSRRPSG) show a composition bias toward low complexity. 4 positions are modified to phosphoserine: serine 112, serine 116, serine 120, and serine 135. Positions 148 to 163 (NGSSEATLPAQMSTLH) are enriched in polar residues. An LIM zinc-binding domain is found at 253-312 (PECTRCGHGIVGTIVKARDKLYHPECFMCSDCGLNLKQRGYFFLDERLYCESHAKARVKP).

In terms of assembly, homodimer. Interacts with PTPN13. Interacts (via C-terminus only or via combined C-terminus and LIM domain, but not LIM domain only) with PTPN13 (via the second or fourth PDZ domains). Found in a complex with PTPN13 and TRIP6. Interacts (via PDZ domain) with ACTN1 and ACTN2 (via C-terminal SDL residues). Interacts (via PDZ domain) with TRIP6 (via the second LIM domain or via the third LIM domain plus C-terminus). Interacts (via LIM domain) with GRIA1 (via C-terminus); this interaction as well as the interaction with alpha-actinin is required for their colocalization in early endosomes. Interacts with PDLIM1. Forms (via LIM domain) a heterodimer with PDLIM3. Interacts directly with SRC (via kinase domain and to a lesser extent the SH2 domain). Isoform 2 interacts with NQO1. NQO1-stabilized isoform 2 heterodimerizes with isoform 1. In terms of processing, phosphorylated on tyrosine residue(s). Can be dephosphorylated by PTPN13. In terms of tissue distribution, found in brain.

It localises to the cytoplasm. The protein resides in the cytoskeleton. The protein localises to the nucleus. Its subcellular location is the perinuclear region. It is found in the cell projection. It localises to the lamellipodium. The protein resides in the dendritic spine. The protein localises to the early endosome membrane. Its subcellular location is the recycling endosome membrane. It is found in the synapse. It localises to the synaptosome. Suppresses SRC activation by recognizing and binding to active SRC and facilitating PTPN13-mediated dephosphorylation of SRC 'Tyr-419' leading to its inactivation. Inactivated SRC dissociates from this protein allowing the initiation of a new SRC inactivation cycle. Involved in reorganization of the actin cytoskeleton. In nonmuscle cells, binds to ACTN1 (alpha-actinin-1), increases the affinity of ACTN1 to F-actin (filamentous actin), and promotes formation of actin stress fibers. Involved in regulation of the synaptic AMPA receptor transport in dendritic spines of hippocampal pyramidal neurons directing the receptors toward an insertion at the postsynaptic membrane. Links endosomal surface-internalized GRIA1-containing AMPA receptors to the alpha-actinin/actin cytoskeleton. Increases AMPA receptor-mediated excitatory postsynaptic currents in neurons. Functionally, involved in reorganization of the actin cytoskeleton and in regulation of cell migration. In response to oxidative stress, binds to NQO1, which stabilizes it and protects it from ubiquitin-independent degradation by the core 20S proteasome. Stabilized protein is able to heterodimerize with isoform 1 changing the subcellular location of it from cytoskeleton and nuclei to cytosol, leading to loss of isoforms 1 ability to induce formation of actin stress fibers. Counteracts the effects produced by isoform 1 on organization of actin cytoskeleton and cell motility to fine-tune actin cytoskeleton rearrangement and to attenuate cell migration. The protein is PDZ and LIM domain protein 4 (PDLIM4) of Homo sapiens (Human).